A 321-amino-acid chain; its full sequence is Chlorohydroquinone/hydroquinone 1,2-dioxygenase (321 aa).

VOC domains lie at 10–138 (GLHH…IIEQ) and 160–282 (GFHS…ASVT). Fe cation contacts are provided by His-162, His-229, and Glu-278.

This sequence belongs to the extradiol ring-cleavage dioxygenase family. The cofactor is Fe(2+).

It catalyses the reaction hydroquinone + O2 = (2E,4Z)-4-hydroxy-6-oxohexa-2,4-dienoate + H(+). It carries out the reaction chlorohydroquinone + O2 = 5-chlorocarbonyl-4-hydroxy-penta-2,4-dienoate + H(+). It functions in the pathway xenobiotic degradation; gamma-hexachlorocyclohexane degradation. Its function is as follows. Cleaves aromatic rings with two hydroxyl groups at para positions with consumption of O(2). Catalyzes the cleavage of chlorohydroquinone (CHQ), as part of the gamma-hexachlorocyclohexane (gamma-HCH or lindane) degradation pathway, producing 5-chlorocarbonyl-4-hydroxy-penta-2,4-dienoate as an intermediate product that can react with water yielding maleylacetate. This degradation pathway allows S.japonicum UT26 to grow on gamma-HCH as the sole source of carbon and energy. Can also use hydroquinone (HQ) as substrate, leading to gamma-hydroxymuconic semialdehyde. Is not able to convert catechol, contrary to meta-cleavage dioxygenases. This is Chlorohydroquinone/hydroquinone 1,2-dioxygenase from Sphingobium indicum (strain DSM 16413 / CCM 7287 / MTCC 6362 / UT26 / NBRC 101211 / UT26S) (Sphingobium japonicum).